The chain runs to 170 residues: uncharacterized protein (170 aa).

Positions 15-81 form a coiled coil; the sequence is EAFDEKAEKE…EREKSKSAVS (67 aa). The segment covering 20–77 has biased composition (basic and acidic residues); the sequence is KAEKEKVEKEKALKEKTEKEKAEKEKAEKEKVEKEKAEKEKAAKEKAAKEKAEREKSK. Positions 20–95 are disordered; that stretch reads KAEKEKVEKE…NQNSNKGNVE (76 aa). Positions 78–92 are enriched in polar residues; the sequence is SAVSPATTNQNSNKG. Residues 98-118 traverse the membrane as a helical segment; that stretch reads VAIGVLAGGAVTGVAVGGAYL.

Its subcellular location is the membrane. This is an uncharacterized protein from Dictyostelium discoideum (Social amoeba).